A 78-amino-acid chain; its full sequence is Small ribosomal subunit protein bS18 (78 aa).

It belongs to the bacterial ribosomal protein bS18 family. In terms of assembly, part of the 30S ribosomal subunit. Forms a tight heterodimer with protein bS6.

Functionally, binds as a heterodimer with protein bS6 to the central domain of the 16S rRNA, where it helps stabilize the platform of the 30S subunit. The protein is Small ribosomal subunit protein bS18 of Rhodospirillum rubrum (strain ATCC 11170 / ATH 1.1.1 / DSM 467 / LMG 4362 / NCIMB 8255 / S1).